The following is a 341-amino-acid chain: MINQVYQLVAPRQFDVTYNNVDIYGNHVIVRPLYLSICAADQRYYTGRRDENVLRKKLPMSLVHEAVGEVVFDSKGVFEKGTKVVMVPNTPTEQHHIIAENYLASSYFRSSGYDGFMQDYVVMAHDRIVPLPNDIDLSTISYTELVSVSYHAIQRFERKSIPLKTSFGIWGDGNLGYITAILLRKLYPEAKTYVFGKTDYKLSHFSFVDDIFTVNQIPDDLKIDHAFECVGGKGSQVALQQIVEHISPEGSIALLGVSELPVEVNTRLVLEKGLTLIGSSRSGSKDFEQVVDLYRKYPDIVEKLALLKGHEINVCTMQDIVQAFEMDLSTSWGKTVLKWTI.

Residues Cys38, His64, Glu65, and Glu144 each contribute to the Zn(2+) site.

Belongs to the zinc-containing alcohol dehydrogenase family. In terms of assembly, heterodimer together with TarI. Zn(2+) is required as a cofactor.

The enzyme catalyses D-ribitol 5-phosphate + NADP(+) = D-ribulose 5-phosphate + NADPH + H(+). Its pathway is cell wall biogenesis; poly(ribitol phosphate) teichoic acid biosynthesis. Its function is as follows. Catalyzes the NADPH dependent reduction of D-ribulose 5-phosphate to D-ribitol 5-phosphate. In Staphylococcus aureus (strain NCTC 8325 / PS 47), this protein is Ribulose-5-phosphate reductase 2.